We begin with the raw amino-acid sequence, 280 residues long: uncharacterized protein (280 aa).

The protein belongs to the eukaryotic-type primase small subunit family.

This is an uncharacterized protein from Archaeoglobus fulgidus (strain ATCC 49558 / DSM 4304 / JCM 9628 / NBRC 100126 / VC-16).